Here is a 327-residue protein sequence, read N- to C-terminus: Biotin synthase (327 aa).

In terms of domain architecture, Radical SAM core spans 49 to 273 (FNKDKIDLCS…ICIARIALPD (225 aa)). [4Fe-4S] cluster is bound by residues cysteine 67, cysteine 71, and cysteine 74. [2Fe-2S] cluster-binding residues include serine 110, cysteine 142, cysteine 201, and arginine 277.

The protein belongs to the radical SAM superfamily. Biotin synthase family. As to quaternary structure, homodimer. The cofactor is [4Fe-4S] cluster. [2Fe-2S] cluster serves as cofactor.

The enzyme catalyses (4R,5S)-dethiobiotin + (sulfur carrier)-SH + 2 reduced [2Fe-2S]-[ferredoxin] + 2 S-adenosyl-L-methionine = (sulfur carrier)-H + biotin + 2 5'-deoxyadenosine + 2 L-methionine + 2 oxidized [2Fe-2S]-[ferredoxin]. It functions in the pathway cofactor biosynthesis; biotin biosynthesis; biotin from 7,8-diaminononanoate: step 2/2. Its function is as follows. Catalyzes the conversion of dethiobiotin (DTB) to biotin by the insertion of a sulfur atom into dethiobiotin via a radical-based mechanism. The chain is Biotin synthase from Methanococcus maripaludis (strain C6 / ATCC BAA-1332).